A 471-amino-acid chain; its full sequence is Putative multidrug resistance protein MdtD (471 aa).

Residues 1–11 (MTELPDSTRWQ) are Periplasmic-facing. Residues 12–32 (LWIVAFGFFMQSLDTTIVNTA) form a helical membrane-spanning segment. Topologically, residues 33 to 48 (LPSMAQSLGESPLHMH) are cytoplasmic. Residues 49-69 (MVIVSYVLTVAVMLPASGWLA) traverse the membrane as a helical segment. At 70 to 76 (DKVGVRN) the chain is on the periplasmic side. The chain crosses the membrane as a helical span at residues 77 to 97 (IFFTAIVLFTLGSLFCALSGT). The Cytoplasmic portion of the chain corresponds to 98-101 (LNEL). Residues 102-124 (LLARALQGVGGAMMVPVGRLTVM) traverse the membrane as a helical segment. At 125 to 137 (KIVPREQYMAAMT) the chain is on the periplasmic side. A helical membrane pass occupies residues 138-158 (FVTLPGQVGPLLGPALGGLLV). Over 159-164 (EYASWH) the chain is Cytoplasmic. A helical membrane pass occupies residues 165–185 (WIFLINIPVGIIGAIATLLLM). Residues 186 to 196 (PNYTMQTRRFD) are Periplasmic-facing. Residues 197–217 (LSGFLLLAVGMAVLTLALDGS) form a helical membrane-spanning segment. Topologically, residues 218–224 (KGTGLSP) are cytoplasmic. A helical membrane pass occupies residues 225 to 245 (LAIAGLVAVGVVALVLYLLHA). The Periplasmic portion of the chain corresponds to 246 to 262 (RNNNRALFSLKLFRTRT). A helical transmembrane segment spans residues 263-283 (FSLGLAGSFAGRIGSGMLPFM). Over 284-285 (TP) the chain is Cytoplasmic. A helical membrane pass occupies residues 286–306 (VFLQIGLGFSPFHAGLMMIPM). Topologically, residues 307–341 (VLGSMGMKRIVVQVVNRFGYRRVLVATTLGLSLIT) are periplasmic. The chain crosses the membrane as a helical span at residues 342-362 (LLFMTTALLGWYYVLPFVLFL). At 363 to 395 (QGMVNSTRFSSMNTLTLKDLPDNLASSGNSLLS) the chain is on the cytoplasmic side. A helical transmembrane segment spans residues 396–416 (MIMQLSMSIGVTIAGLLLGLF). Residues 417–430 (GSQHVSVDSGTTQT) are Periplasmic-facing. Residues 431–451 (VFMYTWLSMAFIIALPAFIFA) form a helical membrane-spanning segment. Residues 452-471 (RVPNDTHQNVAISRRKRSAQ) are Cytoplasmic-facing.

The protein belongs to the major facilitator superfamily. TCR/Tet family.

It localises to the cell inner membrane. In Shigella sonnei (strain Ss046), this protein is Putative multidrug resistance protein MdtD.